A 340-amino-acid polypeptide reads, in one-letter code: Capsid protein alpha (340 aa).

The interval 1 to 39 (MVRKGDKKLAKPPTTKAANSQPRRRATQRRRSGRADAPL) is disordered. Over residues 22-32 (PRRRATQRRRS) the composition is skewed to basic residues.

This sequence belongs to the peptidase A6 family.

The protein resides in the virion. In terms of biological role, capsid protein alpha self-assembles to form an icosahedral procapsid with a T=3 symmetry, about 30 nm in diameter, and consisting of 60 capsid proteins trimers. The capsid encapsulates the two genomic RNAs. This is Capsid protein alpha (alpha) from Striped jack nervous necrosis virus (SjNNV).